The sequence spans 361 residues: Peptide chain release factor 1 (361 aa).

An N5-methylglutamine modification is found at Gln235.

Belongs to the prokaryotic/mitochondrial release factor family. Post-translationally, methylated by PrmC. Methylation increases the termination efficiency of RF1.

It is found in the cytoplasm. Functionally, peptide chain release factor 1 directs the termination of translation in response to the peptide chain termination codons UAG and UAA. The protein is Peptide chain release factor 1 of Buchnera aphidicola subsp. Acyrthosiphon pisum (strain 5A).